The primary structure comprises 125 residues: MIQAILVAFGGAIGSVLRYYVGQWALRLMGSAFPWGTLAVNVVGCFVIGVFAELIARKFDASVELRLLLITGFLGGFTTFSAFSLDAISLFERGEAVAGGIYIAASVGLSMAAVIAGLAVMRALA.

The next 4 helical transmembrane spans lie at 1 to 21 (MIQA…RYYV), 32 to 52 (AFPW…GVFA), 68 to 88 (LLIT…LDAI), and 101 to 121 (IYIA…LAVM). 2 residues coordinate Na(+): G75 and T78.

It belongs to the fluoride channel Fluc/FEX (TC 1.A.43) family.

Its subcellular location is the cell inner membrane. The catalysed reaction is fluoride(in) = fluoride(out). With respect to regulation, na(+) is not transported, but it plays an essential structural role and its presence is essential for fluoride channel function. Its function is as follows. Fluoride-specific ion channel. Important for reducing fluoride concentration in the cell, thus reducing its toxicity. This Rhizobium johnstonii (strain DSM 114642 / LMG 32736 / 3841) (Rhizobium leguminosarum bv. viciae) protein is Fluoride-specific ion channel FluC.